A 345-amino-acid chain; its full sequence is MSKRGTRTPGYWYDNTPIPLPARILAPVYGAAIALRRALYRRGWRRRHRVPVPVIVVGNVTAGGTGKTPLTIALVVKLQEAGWTPGVASRGYGRDDAGTARWVEADTPVALGGDEPVLIAWKTGARVRVDSDRLAAARALVEAGCDIVICDDGLQHYRLARDVEIEVVDGQRRYGNGRLLPAGPLREPAARARDCDFRVVNLGQASATAAPQVPDDAGFGEWQMRLSIDSVQPMDGKRAQPLSMLAGQRVHAVAGIAHPERFFAMLRARGIGVVPHAFPDHHVYRAADFSFGSRLPVLMTEKDAVKCRPFADEWLYSVPLKAELPAAFWVSLLDRLNKLASRQGV.

Position 61-68 (61-68) interacts with ATP; it reads TAGGTGKT.

Belongs to the LpxK family.

The catalysed reaction is a lipid A disaccharide + ATP = a lipid IVA + ADP + H(+). Its pathway is glycolipid biosynthesis; lipid IV(A) biosynthesis; lipid IV(A) from (3R)-3-hydroxytetradecanoyl-[acyl-carrier-protein] and UDP-N-acetyl-alpha-D-glucosamine: step 6/6. Functionally, transfers the gamma-phosphate of ATP to the 4'-position of a tetraacyldisaccharide 1-phosphate intermediate (termed DS-1-P) to form tetraacyldisaccharide 1,4'-bis-phosphate (lipid IVA). This is Tetraacyldisaccharide 4'-kinase from Xanthomonas euvesicatoria pv. vesicatoria (strain 85-10) (Xanthomonas campestris pv. vesicatoria).